A 62-amino-acid chain; its full sequence is Defensin BmKDfsin5 (62 aa).

The signal sequence occupies residues 1–24 (MKVIALFFLFAFIFCTLEVAIVEA). 3 disulfide bridges follow: Cys28–Cys49, Cys35–Cys57, and Cys39–Cys59.

This sequence belongs to the invertebrate defensin family. Type 2 subfamily. In terms of tissue distribution, highly expressed in non-venom gland (hemolymph) and moderately expressed in venom gland.

It localises to the secreted. Functionally, antibacterial peptide active against Gram-positive bacteria (including S.aureus ATCC25923 (MIC=2.5 uM), M.luteus AB93113 (MIC=2.5 uM), and the antibiotic-resistant S.epidermidis PRSE P1389 (MIC=1.25 uM)), but not against Gram-negative bacteria (including E.coli and P.aeruginosa). Also has weak blocking activity on Kv1.1/KCNA1 (8.7% inhibition), Kv1.2/KCNA2 (10.2% inhibition), Kv1.3/KCNA3 (9.0% inhibition), KCa3.1/KCNN4/IK (9.1% inhibition), KCa2.3/KCNN3/SK3 (46.3% inhibition) and Kv11.1/KCNH2/ERG1 (16.9% inhibition) channels (tested at 1 uM). It inhibits potassium channel current by interacting with the pore region. The protein is Defensin BmKDfsin5 of Olivierus martensii (Manchurian scorpion).